The primary structure comprises 1150 residues: Apomucin (1150 aa).

2 stretches are compositionally biased toward low complexity: residues 1 to 36 and 46 to 79; these read ETAR…TGAS and SVAG…SSVG. 5 tandem repeats follow at residues 1 to 44, 45 to 125, 126 to 206, 207 to 287, and 288 to 368. Residues 1-368 form a 6 X 81 AA tandem repeats region; that stretch reads ETARPSVAGS…ASIGQPETSR (368 aa). 2 disordered regions span residues 1–730 and 776–925; these read ETAR…KTGI and APGS…PAPL. O-linked (GalNAc...) serine; partial glycans are attached at residues S46, S50, S51, S57, S58, and S61. T66 carries O-linked (GalNAc...) threonine; partial glycosylation. S67 carries an O-linked (GalNAc...) serine; partial glycan. O-linked (GalNAc...) threonine; partial glycosylation is found at T73 and T74. O-linked (GalNAc...) serine; partial glycosylation is found at S76 and S77. O-linked (GalNAc...) threonine; partial glycosylation is found at T81 and T83. Residues 86 to 117 are compositionally biased toward low complexity; it reads PSVAGSGTTGTVSGASGSTGSSSGSPGATGAS. Residues S87 and S91 are each glycosylated (O-linked (GalNAc...) serine; partial). Residues T93, T94, and T96 are each glycosylated (O-linked (GalNAc...) threonine; partial). S98, S101, and S103 each carry an O-linked (GalNAc...) serine; partial glycan. O-linked (GalNAc...) threonine; partial glycosylation is present at T104. O-linked (GalNAc...) serine; partial glycans are attached at residues S106, S107, S108, and S110. An O-linked (GalNAc...) threonine; partial glycan is attached at T114. S117 carries an O-linked (GalNAc...) serine; partial glycan. Residue T123 is glycosylated (O-linked (GalNAc...) threonine; partial). S124 carries an O-linked (GalNAc...) serine; partial glycan. 7 stretches are compositionally biased toward low complexity: residues 127–160, 167–198, 208–241, 248–279, 289–322, 329–360, and 370–396; these read SVAG…SSVG, PSVA…TGAS, and SVAG…ATTS. The stretch at 369-391 is one 6; truncated repeat; that stretch reads ISVAGSSGAPAVSSGASQAAGTS. N418 carries an N-linked (GlcNAc...) asparagine glycan. Positions 442–459 are enriched in polar residues; it reads SYNTEATTSIGRSGTTHT. Residues 473 to 506 show a composition bias toward low complexity; that stretch reads SHSSQSSKPGSSVTTPGSPESGSETGTSGEFSTT. 2 stretches are compositionally biased toward polar residues: residues 507-517 and 537-547; these read VISGSSHTEAT and ELSGTTIASGN. An N-linked (GlcNAc...) asparagine glycan is attached at N547. A compositionally biased stretch (low complexity) spans 548 to 558; the sequence is ATTEATTSTET. Polar residues predominate over residues 564-586; that stretch reads TGAQTTVPGSQVSGSETGTSEAV. The segment covering 590–625 has biased composition (low complexity); it reads AIASGSSSTGTTSGASDSQVTGSRTGTTGVVLGTTV. 2 stretches are compositionally biased toward polar residues: residues 626 to 635 and 643 to 661; these read APGSSSTGAT and GTRS…TTYE. The span at 671–682 shows a compositional bias: gly residues; sequence GGSGTPGSGINT. Composition is skewed to polar residues over residues 688–697, 706–729, and 779–788; these read QVTGIQTGTT, LPGS…SKTG, and SFNTKATTPT. Positions 790–833 are enriched in low complexity; that stretch reads VRAATGAGTAVGATSRSTGISTGPENSTPGTTETGSGTTSSPGG. Over residues 875–908 the composition is skewed to polar residues; sequence ETTTAPRISATGSTSVSKEITASPKVSSPETTAG. 4 N-linked (GlcNAc...) asparagine glycosylation sites follow: N917, N985, N1002, and N1068. The VWFC domain maps to 929 to 995; that stretch reads PVCHGPLGEE…DTCCEIGHCE (67 aa). 4 disulfide bridges follow: C1062/C1109, C1076/C1123, C1085/C1139, and C1089/C1141. A CTCK domain is found at 1062 to 1146; the sequence is CKPSPVNVTV…TACSCLDPCQ (85 aa).

In terms of assembly, intermolecular disulfide bonds could help maintain a multimeric mucin structure. Post-translationally, extensively O-glycosylated on most but not all Ser and Thr residues of the repeat units. Highest glycosylation appears to occur on Ser residues which have Gly at positions at +2 or -2 from the glycosylation site or, where Gly is the penultimate residue. The presence of proline (usually at position +3 or -3) appears to also enhance glycosylation. In terms of tissue distribution, submaxillary mucosae.

The protein localises to the secreted. Its function is as follows. Apomucin is part of mucin, the major glycoprotein synthesized and secreted by mucous cells of the submaxillary gland. Its highly viscous aqueous solutions serve to lubricate the oral cavity and to protect it from the external environment. The polypeptide is Apomucin (Sus scrofa (Pig)).